We begin with the raw amino-acid sequence, 281 residues long: Glyoxalase 1 (281 aa).

2 VOC domains span residues 4–127 (RALH…IGKA) and 132–251 (KVLR…FVGD).

This sequence belongs to the glyoxalase I family. As to expression, expressed in the following tissues in both larvae and adults: pharynx, pharyngeal-intestinal valve, intestine, anal sphincter, vulval muscle, seam cells and the nervous system.

Its function is as follows. Thought to act as a glyoxalase. May remove methylglyoxal from mitochondrial proteins. Has roles in reducing oxidative stress and increasing lifespan. This Caenorhabditis elegans protein is Glyoxalase 1 (glod-4).